The following is a 132-amino-acid chain: D-ribose pyranase (132 aa).

His-20 acts as the Proton donor in catalysis. Residues Asp-28, His-99, and 121-123 contribute to the substrate site; that span reads YSN.

This sequence belongs to the RbsD / FucU family. RbsD subfamily. Homodecamer.

It is found in the cytoplasm. The catalysed reaction is beta-D-ribopyranose = beta-D-ribofuranose. The protein operates within carbohydrate metabolism; D-ribose degradation; D-ribose 5-phosphate from beta-D-ribopyranose: step 1/2. Catalyzes the interconversion of beta-pyran and beta-furan forms of D-ribose. This is D-ribose pyranase from Streptococcus agalactiae serotype Ia (strain ATCC 27591 / A909 / CDC SS700).